A 212-amino-acid polypeptide reads, in one-letter code: F420-dependent NADP reductase (212 aa).

NADP(+) contacts are provided by residues 9–12 (TGNL), 31–32 (SR), Lys-36, Ile-72, His-76, Val-98, and Ala-137. Position 207 (Leu-207) interacts with coenzyme F420-(gamma-Glu)n.

This sequence belongs to the F420-dependent NADP reductase family. As to quaternary structure, homodimer.

The catalysed reaction is reduced coenzyme F420-(gamma-L-Glu)(n) + NADP(+) = oxidized coenzyme F420-(gamma-L-Glu)(n) + NADPH + 2 H(+). Functionally, catalyzes the reversible reduction of NADP(+) by F420H(2). In this reaction the proS hydrogen at C5 of F420 is transferred into the proS position at C4 of NADPH. The sequence is that of F420-dependent NADP reductase (fno) from Archaeoglobus fulgidus (strain ATCC 49558 / DSM 4304 / JCM 9628 / NBRC 100126 / VC-16).